Reading from the N-terminus, the 447-residue chain is Argininosuccinate synthase (447 aa).

Residues alanine 17 to serine 25 and alanine 43 contribute to the ATP site. An L-citrulline-binding site is contributed by tyrosine 99. 2 residues coordinate ATP: glycine 129 and threonine 131. Residues threonine 131, asparagine 135, and aspartate 136 each coordinate L-aspartate. Residue asparagine 135 participates in L-citrulline binding. Aspartate 136 is a binding site for ATP. 2 residues coordinate L-citrulline: arginine 139 and serine 192. Aspartate 194 contacts ATP. L-citrulline-binding residues include threonine 201, glutamate 203, and glutamate 280.

Belongs to the argininosuccinate synthase family. Type 2 subfamily. As to quaternary structure, homotetramer.

The protein resides in the cytoplasm. The catalysed reaction is L-citrulline + L-aspartate + ATP = 2-(N(omega)-L-arginino)succinate + AMP + diphosphate + H(+). It participates in amino-acid biosynthesis; L-arginine biosynthesis; L-arginine from L-ornithine and carbamoyl phosphate: step 2/3. This chain is Argininosuccinate synthase, found in Escherichia coli (strain K12 / MC4100 / BW2952).